A 259-amino-acid polypeptide reads, in one-letter code: Protein unc-50 homolog (259 aa).

Met-1 is modified (N-acetylmethionine). At 1–82 (MLPSTSLSSS…TKDQWARDDP (82 aa)) the chain is on the cytoplasmic side. Ser-6 bears the Phosphoserine mark. A helical membrane pass occupies residues 83–103 (AFLVLLSIWLCVSTIGFGFVL). The Lumenal segment spans residues 104–112 (DMGFFETIK). The chain crosses the membrane as a helical span at residues 113 to 133 (LLLWVVFIDCVGVGLLISTLM). The Cytoplasmic segment spans residues 134 to 163 (WFVSNKYLVKRQSRDYDVEWGYAFDVHLNA). A helical membrane pass occupies residues 164–184 (FYPLLVILHFIQLFFINHVIL). Topologically, residues 185–187 (TDT) are lumenal. The helical transmembrane segment at 188-208 (FIGYLVGNTLWLIAVGYYIYV) threads the bilayer. Residues 209–222 (TFLGYSALPFLKNT) lie on the Cytoplasmic side of the membrane. The chain crosses the membrane as a helical span at residues 223-243 (VILLYPFAPLMVLYGLSLALG). Residues 244–259 (WNFTHTLCSFYKYRVK) lie on the Lumenal side of the membrane.

This sequence belongs to the unc-50 family. As to expression, highly expressed in periodontal ligament and bone marrow, but not in gingival fibroblasts.

Its subcellular location is the nucleus inner membrane. It localises to the golgi apparatus membrane. Involved in the cell surface expression of neuronal nicotinic receptors. Binds RNA. This chain is Protein unc-50 homolog (Unc50), found in Mus musculus (Mouse).